A 503-amino-acid polypeptide reads, in one-letter code: Ribonuclease Y (503 aa).

The chain crosses the membrane as a helical span at residues 2 to 22; sequence GIIIGLIIVSVALIISLCSLL. One can recognise a KH domain in the interval 193–253; sequence TTNLVKLPND…IRREIATKTL (61 aa). The region spanning 319–412 is the HD domain; the sequence is VLLHSVEVAK…VAIADAISAS (94 aa).

Belongs to the RNase Y family.

The protein resides in the cell membrane. Its function is as follows. Endoribonuclease that initiates mRNA decay. This Mesoplasma florum (strain ATCC 33453 / NBRC 100688 / NCTC 11704 / L1) (Acholeplasma florum) protein is Ribonuclease Y.